The chain runs to 199 residues: FMN-dependent NADH:quinone oxidoreductase 2 (199 aa).

FMN is bound by residues S10, 16 to 18 (SVS), and 96 to 99 (MYNF).

Belongs to the azoreductase type 1 family. In terms of assembly, homodimer. FMN serves as cofactor.

The enzyme catalyses 2 a quinone + NADH + H(+) = 2 a 1,4-benzosemiquinone + NAD(+). It carries out the reaction N,N-dimethyl-1,4-phenylenediamine + anthranilate + 2 NAD(+) = 2-(4-dimethylaminophenyl)diazenylbenzoate + 2 NADH + 2 H(+). Functionally, quinone reductase that provides resistance to thiol-specific stress caused by electrophilic quinones. Its function is as follows. Also exhibits azoreductase activity. Catalyzes the reductive cleavage of the azo bond in aromatic azo compounds to the corresponding amines. This Pseudomonas fluorescens (strain ATCC BAA-477 / NRRL B-23932 / Pf-5) protein is FMN-dependent NADH:quinone oxidoreductase 2.